We begin with the raw amino-acid sequence, 993 residues long: Isoleucine--tRNA ligase (993 aa).

The 'HIGH' region signature appears at 64–74 (PYANGNIHIGH). Glu621 is a binding site for L-isoleucyl-5'-AMP. A 'KMSKS' region motif is present at residues 662–666 (KMSKS). An ATP-binding site is contributed by Lys665.

It belongs to the class-I aminoacyl-tRNA synthetase family. IleS type 1 subfamily. As to quaternary structure, monomer.

It localises to the cytoplasm. The catalysed reaction is tRNA(Ile) + L-isoleucine + ATP = L-isoleucyl-tRNA(Ile) + AMP + diphosphate. Its function is as follows. Catalyzes the attachment of isoleucine to tRNA(Ile). As IleRS can inadvertently accommodate and process structurally similar amino acids such as valine, to avoid such errors it has two additional distinct tRNA(Ile)-dependent editing activities. One activity is designated as 'pretransfer' editing and involves the hydrolysis of activated Val-AMP. The other activity is designated 'posttransfer' editing and involves deacylation of mischarged Val-tRNA(Ile). The sequence is that of Isoleucine--tRNA ligase from Mesorhizobium japonicum (strain LMG 29417 / CECT 9101 / MAFF 303099) (Mesorhizobium loti (strain MAFF 303099)).